The sequence spans 56 residues: Small ribosomal subunit protein uS14 (56 aa).

Belongs to the universal ribosomal protein uS14 family. As to quaternary structure, component of the small ribosomal subunit (SSU). Mature yeast ribosomes consist of a small (40S) and a large (60S) subunit. The 40S small subunit contains 1 molecule of ribosomal RNA (18S rRNA) and at least 33 different proteins. The large 60S subunit contains 3 rRNA molecules (25S, 5.8S and 5S rRNA) and at least 46 different proteins.

The protein resides in the cytoplasm. It localises to the nucleus. Its function is as follows. Component of the ribosome, a large ribonucleoprotein complex responsible for the synthesis of proteins in the cell. The small ribosomal subunit (SSU) binds messenger RNAs (mRNAs) and translates the encoded message by selecting cognate aminoacyl-transfer RNA (tRNA) molecules. The large subunit (LSU) contains the ribosomal catalytic site termed the peptidyl transferase center (PTC), which catalyzes the formation of peptide bonds, thereby polymerizing the amino acids delivered by tRNAs into a polypeptide chain. The nascent polypeptides leave the ribosome through a tunnel in the LSU and interact with protein factors that function in enzymatic processing, targeting, and the membrane insertion of nascent chains at the exit of the ribosomal tunnel. This is Small ribosomal subunit protein uS14 (rps29) from Schizosaccharomyces pombe (strain 972 / ATCC 24843) (Fission yeast).